The chain runs to 562 residues: Arginine--tRNA ligase (562 aa).

A 'HIGH' region motif is present at residues 121-131; it reads PNIAKPISMGH.

It belongs to the class-I aminoacyl-tRNA synthetase family. As to quaternary structure, monomer.

It is found in the cytoplasm. The catalysed reaction is tRNA(Arg) + L-arginine + ATP = L-arginyl-tRNA(Arg) + AMP + diphosphate. The chain is Arginine--tRNA ligase from Lactiplantibacillus plantarum (strain ATCC BAA-793 / NCIMB 8826 / WCFS1) (Lactobacillus plantarum).